Consider the following 111-residue polypeptide: UPF0060 membrane protein Pden_1837 (111 aa).

Transmembrane regions (helical) follow at residues 7–27, 30–50, 62–82, and 91–111; these read IAVYVLAALAEIAGCFAFWAW, LGKSPLWLVPGMVSLAVFAWL, AYAAYGGIYVTASLGWLWLTE, and ILGGGLCVLGAMVILAGPRAA.

Belongs to the UPF0060 family.

The protein localises to the cell inner membrane. This chain is UPF0060 membrane protein Pden_1837, found in Paracoccus denitrificans (strain Pd 1222).